A 159-amino-acid polypeptide reads, in one-letter code: NADH-quinone oxidoreductase subunit I (159 aa).

4Fe-4S ferredoxin-type domains follow at residues 51 to 80 (RRYENGEERCIACKLCEAICPAQAIVIEAD) and 90 to 119 (TRYDIDMTKCIYCGLCQEACPVDAIVEGPN). The [4Fe-4S] cluster site is built by Cys-60, Cys-63, Cys-66, Cys-70, Cys-99, Cys-102, Cys-105, and Cys-109.

This sequence belongs to the complex I 23 kDa subunit family. As to quaternary structure, NDH-1 is composed of 14 different subunits. Subunits NuoA, H, J, K, L, M, N constitute the membrane sector of the complex. Requires [4Fe-4S] cluster as cofactor.

The protein localises to the cell inner membrane. It carries out the reaction a quinone + NADH + 5 H(+)(in) = a quinol + NAD(+) + 4 H(+)(out). Its function is as follows. NDH-1 shuttles electrons from NADH, via FMN and iron-sulfur (Fe-S) centers, to quinones in the respiratory chain. The immediate electron acceptor for the enzyme in this species is believed to be ubiquinone. Couples the redox reaction to proton translocation (for every two electrons transferred, four hydrogen ions are translocated across the cytoplasmic membrane), and thus conserves the redox energy in a proton gradient. The polypeptide is NADH-quinone oxidoreductase subunit I (Rickettsia peacockii (strain Rustic)).